We begin with the raw amino-acid sequence, 403 residues long: Peroxisomal membrane protein PEX13 (403 aa).

The span at 1 to 11 (MASQPPPPPKP) shows a compositional bias: pro residues. The segment at 1–68 (MASQPPPPPK…PSQQTGSSSV (68 aa)) is disordered. Over 1–134 (MASQPPPPPK…SSRGAFQSIE (134 aa)) the chain is Peroxisomal matrix. A compositionally biased stretch (polar residues) spans 59–68 (PSQQTGSSSV). The chain crosses the membrane as a helical span at residues 135-155 (SIVHAFASVSMMMDATFSAVY). The segment at 145–233 (MMMDATFSAV…EDRAATSAKS (89 aa)) is targeting to peroxisomes. Residues 156–174 (NSFRAVLDVANHFSRLKIH) are Cytoplasmic-facing. Residues 175 to 192 (FTKVFSAFALVRTIRYLY) form a helical membrane-spanning segment. The tract at residues 175–196 (FTKVFSAFALVRTIRYLYRRLQ) is interaction with PEX19. Residues 193-233 (RRLQRMLGLRRGSENEDLWAESEGTVACLGAEDRAATSAKS) are Peroxisomal matrix-facing. The chain crosses the membrane as a helical span at residues 234–254 (WPIFLFFAVILGGPYLIWKLL). Topologically, residues 255–403 (STHSDEVTDS…IGKDGEKQDL (149 aa)) are cytoplasmic. The 65-residue stretch at 272–336 (DDHVVARAEY…PANYVKILGK (65 aa)) folds into the SH3 domain. The residue at position 354 (serine 354) is a Phosphoserine.

Belongs to the peroxin-13 family. In terms of assembly, interacts (via SH3 domain) with PEX14 (via SH3-binding motif); forming the PEX13-PEX14 docking complex. Interacts with PEX19.

The protein localises to the peroxisome membrane. In terms of biological role, component of the PEX13-PEX14 docking complex, a translocon channel that specifically mediates the import of peroxisomal cargo proteins bound to PEX5 receptor. The PEX13-PEX14 docking complex forms a large import pore which can be opened to a diameter of about 9 nm. Mechanistically, PEX5 receptor along with cargo proteins associates with the PEX14 subunit of the PEX13-PEX14 docking complex in the cytosol, leading to the insertion of the receptor into the organelle membrane with the concomitant translocation of the cargo into the peroxisome matrix. Involved in the import of PTS1- and PTS2-type containing proteins. The protein is Peroxisomal membrane protein PEX13 of Homo sapiens (Human).